A 341-amino-acid polypeptide reads, in one-letter code: Alanine racemase (341 aa).

The active-site Proton acceptor; specific for D-alanine is the lysine 33. At lysine 33 the chain carries N6-(pyridoxal phosphate)lysine. Arginine 126 serves as a coordination point for substrate. Catalysis depends on tyrosine 236, which acts as the Proton acceptor; specific for L-alanine. Residue methionine 284 participates in substrate binding.

The protein belongs to the alanine racemase family. Pyridoxal 5'-phosphate serves as cofactor.

The enzyme catalyses L-alanine = D-alanine. Its pathway is amino-acid biosynthesis; D-alanine biosynthesis; D-alanine from L-alanine: step 1/1. In terms of biological role, catalyzes the interconversion of L-alanine and D-alanine. This chain is Alanine racemase (alr), found in Aquifex pyrophilus.